A 339-amino-acid chain; its full sequence is Tetraacyldisaccharide 4'-kinase (339 aa).

53–60 is a binding site for ATP; sequence TCGGAGKT.

The protein belongs to the LpxK family.

The catalysed reaction is a lipid A disaccharide + ATP = a lipid IVA + ADP + H(+). Its pathway is glycolipid biosynthesis; lipid IV(A) biosynthesis; lipid IV(A) from (3R)-3-hydroxytetradecanoyl-[acyl-carrier-protein] and UDP-N-acetyl-alpha-D-glucosamine: step 6/6. In terms of biological role, transfers the gamma-phosphate of ATP to the 4'-position of a tetraacyldisaccharide 1-phosphate intermediate (termed DS-1-P) to form tetraacyldisaccharide 1,4'-bis-phosphate (lipid IVA). The sequence is that of Tetraacyldisaccharide 4'-kinase from Bartonella henselae (strain ATCC 49882 / DSM 28221 / CCUG 30454 / Houston 1) (Rochalimaea henselae).